We begin with the raw amino-acid sequence, 1151 residues long: Elicitor of plant defense protein 1 (1151 aa).

Disordered stretches follow at residues tyrosine 22–glutamate 130, glutamate 178–lysine 197, and asparagine 236–proline 255. The segment covering isoleucine 39–tryptophan 49 has biased composition (acidic residues). Positions glutamine 64–threonine 99 are enriched in polar residues. Positions asparagine 104 to proline 122 are enriched in low complexity. Residues glutamate 178–serine 187 show a composition bias toward basic and acidic residues. Residues proline 242 to leucine 500 enclose the uDENN domain. A cDENN domain is found at glutamate 524–glutamine 656. The region spanning alanine 658–alanine 1019 is the dDENN domain. Polar residues-rich tracts occupy residues serine 695 to glycine 711 and threonine 744 to serine 760. A disordered region spans residues serine 695–proline 809. The segment covering leucine 784 to arginine 798 has biased composition (basic and acidic residues). The Phorbol-ester/DAG-type zinc finger occupies glycine 886–cysteine 934.

This sequence belongs to the EPD1 elicitor family.

The protein localises to the secreted. It is found in the host cell. Its function is as follows. Acts as an elicitor that triggers cell death and defense responses in the host plants. In Gibberella zeae (strain ATCC MYA-4620 / CBS 123657 / FGSC 9075 / NRRL 31084 / PH-1) (Wheat head blight fungus), this protein is Elicitor of plant defense protein 1.